Here is a 66-residue protein sequence, read N- to C-terminus: MWKVDDQGFLIISVTGTKFNLIATSSKIGFYTDPPSQLFLMPLNFFPPPKFSKNEPHKKQKRFIYF.

Belongs to the asfivirus I177L family.

The protein resides in the virion. This is Protein I177L from African swine fever virus (isolate Tick/Malawi/Lil 20-1/1983) (ASFV).